Reading from the N-terminus, the 852-residue chain is DNA mismatch repair protein MutS (852 aa).

Residue Gly615–Ser622 coordinates ATP.

Belongs to the DNA mismatch repair MutS family.

This protein is involved in the repair of mismatches in DNA. It is possible that it carries out the mismatch recognition step. This protein has a weak ATPase activity. The protein is DNA mismatch repair protein MutS of Thermodesulfovibrio yellowstonii (strain ATCC 51303 / DSM 11347 / YP87).